A 115-amino-acid chain; its full sequence is MEKMLLKSTTRHVRIFTADVINNDLVFHPNKLTLDLDPDNEFIWNEDSLKKVNQRFTELVQERAGKSLDDYELRKIGSEIEGLIKYLLQNGLLSYNPECRVMNYSMGLPKTKEVL.

Belongs to the complex I NdhM subunit family. As to quaternary structure, NDH-1 can be composed of about 15 different subunits; different subcomplexes with different compositions have been identified which probably have different functions.

It localises to the cellular thylakoid membrane. It catalyses the reaction a plastoquinone + NADH + (n+1) H(+)(in) = a plastoquinol + NAD(+) + n H(+)(out). The catalysed reaction is a plastoquinone + NADPH + (n+1) H(+)(in) = a plastoquinol + NADP(+) + n H(+)(out). NDH-1 shuttles electrons from an unknown electron donor, via FMN and iron-sulfur (Fe-S) centers, to quinones in the respiratory and/or the photosynthetic chain. The immediate electron acceptor for the enzyme in this species is believed to be plastoquinone. Couples the redox reaction to proton translocation, and thus conserves the redox energy in a proton gradient. Cyanobacterial NDH-1 also plays a role in inorganic carbon-concentration. This is NAD(P)H-quinone oxidoreductase subunit M from Prochlorococcus marinus subsp. pastoris (strain CCMP1986 / NIES-2087 / MED4).